We begin with the raw amino-acid sequence, 402 residues long: Multidrug resistance protein MdtH (402 aa).

Residues 1 to 12 (MSRVSQARNLGK) are Cytoplasmic-facing. The helical transmembrane segment at 13–33 (YFLLIDNMLVVLGFFVVFPLI) threads the bilayer. Over 34–98 (SIRFVDQMGW…GFATMGIAHE (65 aa)) the chain is Periplasmic. The chain crosses the membrane as a helical span at residues 99-116 (PWLLWFSCFLSGLGGTLF). The Cytoplasmic segment spans residues 117–138 (DPPRSALVVKLIRPEQRGRFFS). The helical transmembrane segment at 139–159 (LLMMQDSAGAVIGALLGSWLL) threads the bilayer. Residues 160 to 164 (QYDFR) lie on the Periplasmic side of the membrane. A helical membrane pass occupies residues 165–185 (LVCATGAILFILCALFNAWLL). Residues 186–213 (PAWKLSTVRTPVREGMRRVMSDKRFVTY) are Cytoplasmic-facing. The helical transmembrane segment at 214–234 (VLTLAGYYMLAVQVMLMLPIM) threads the bilayer. Residues 235–243 (VNDIAGSPA) lie on the Periplasmic side of the membrane. The chain crosses the membrane as a helical span at residues 244 to 264 (AVKWMYAIEACLSLTLLYPIA). The Cytoplasmic segment spans residues 265-276 (RWSEKRFRLEHR). The helical transmembrane segment at 277–297 (LMAGLLVMSLSMIPIGMVGNL) threads the bilayer. The Periplasmic segment spans residues 298-299 (QQ). Residues 300-320 (LFTLICAFYIGSVIAEPARET) traverse the membrane as a helical segment. Over 321–339 (LSASLADARARGSYMGFSR) the chain is Cytoplasmic. The chain crosses the membrane as a helical span at residues 340-360 (LGLAIGGAIGYIGGGWLFDMG). At 361–367 (KALAQPE) the chain is on the periplasmic side. The chain crosses the membrane as a helical span at residues 368–388 (LPWMMLGIIGFITFLALGWQF). The Cytoplasmic portion of the chain corresponds to 389–402 (SHKRTPRRMLEPGA).

Belongs to the major facilitator superfamily. DHA1 family. MdtH (TC 2.A.1.2.21) subfamily.

The protein resides in the cell inner membrane. The chain is Multidrug resistance protein MdtH from Salmonella schwarzengrund (strain CVM19633).